The chain runs to 487 residues: (S)-N-methylcoclaurine 3'-hydroxylase isozyme 1 (487 aa).

A helical membrane pass occupies residues 4–24 (TVALIAVIISSILYLLFGGSG). Residue Cys-429 participates in heme binding.

It belongs to the cytochrome P450 family. Heme is required as a cofactor.

The protein resides in the endoplasmic reticulum membrane. It localises to the microsome membrane. The catalysed reaction is (S)-N-methylcoclaurine + reduced [NADPH--hemoprotein reductase] + O2 = (S)-3'-hydroxy-N-methylcoclaurine + oxidized [NADPH--hemoprotein reductase] + H2O + H(+). It participates in alkaloid biosynthesis; (S)-reticuline biosynthesis; (S)-reticuline from (S)-norcoclaurine: step 3/4. In terms of biological role, 3'-hydroxylation of (S)-N-methylcoclaurine. The sequence is that of (S)-N-methylcoclaurine 3'-hydroxylase isozyme 1 (CYP80B1) from Eschscholzia californica (California poppy).